The primary structure comprises 193 residues: Xanthine phosphoribosyltransferase (193 aa).

2 residues coordinate xanthine: L20 and N27. Residue 128 to 132 (ANGDA) participates in 5-phospho-alpha-D-ribose 1-diphosphate binding. K156 lines the xanthine pocket.

It belongs to the purine/pyrimidine phosphoribosyltransferase family. Xpt subfamily. Homodimer.

Its subcellular location is the cytoplasm. The catalysed reaction is XMP + diphosphate = xanthine + 5-phospho-alpha-D-ribose 1-diphosphate. Its pathway is purine metabolism; XMP biosynthesis via salvage pathway; XMP from xanthine: step 1/1. Its function is as follows. Converts the preformed base xanthine, a product of nucleic acid breakdown, to xanthosine 5'-monophosphate (XMP), so it can be reused for RNA or DNA synthesis. This chain is Xanthine phosphoribosyltransferase, found in Staphylococcus saprophyticus subsp. saprophyticus (strain ATCC 15305 / DSM 20229 / NCIMB 8711 / NCTC 7292 / S-41).